The following is a 105-amino-acid chain: MESGFLNIGFSSYISVSKIIGIVSPDSAPIRRMIRLAKEQGRLVDATFGRRTRAAILTEGGFIVLSAVLPDTLVSRLEEEEEEEERTEPITEQEAELEEESGEDV.

Positions 76 to 105 (RLEEEEEEEERTEPITEQEAELEEESGEDV) are disordered. Over residues 78-105 (EEEEEEEERTEPITEQEAELEEESGEDV) the composition is skewed to acidic residues.

The protein belongs to the RemA family.

The sequence is that of Putative regulatory protein COPRO5265_1186 from Coprothermobacter proteolyticus (strain ATCC 35245 / DSM 5265 / OCM 4 / BT).